The chain runs to 55 residues: Neurotoxin BmKX-A1-S31 (55 aa).

Residues 1-23 (MKIFFAVLVILVLFSMLIWTAYG) form the signal peptide. Intrachain disulfides connect Cys30-Cys45, Cys36-Cys50, and Cys39-Cys53.

In terms of tissue distribution, expressed by the venom gland.

It is found in the secreted. This is Neurotoxin BmKX-A1-S31 from Olivierus martensii (Manchurian scorpion).